Consider the following 737-residue polypeptide: Glycogen [starch] synthase, muscle (737 aa).

Residue Ser-8 is modified to Phosphoserine; by AMPK and PKA. Ser-11 is modified (phosphoserine). A UDP-binding site is contributed by Lys-39. Residues His-205 and Arg-211 each coordinate UDP-alpha-D-glucose. Alpha-D-glucose 6-phosphate is bound by residues His-291, Glu-292, Gln-294, His-297, and Lys-301. Arg-331 contacts UDP. Arg-331 provides a ligand contact to UDP-alpha-D-glucose. Phosphoserine is present on Ser-412. Residue His-501 coordinates alpha-D-glucose 6-phosphate. Residues Glu-510, Trp-512, and Gly-513 each coordinate UDP-alpha-D-glucose. Thr-515 is a binding site for UDP. Alpha-D-glucose 6-phosphate is bound by residues Arg-582 and Arg-586. The segment at 634 to 737 is disordered; it reads YRYPRPASVP…PTSSLGEERN (104 aa). The residue at position 641 (Ser-641) is a Phosphoserine; by DYRK2, GSK3-alpha, GSK3-beta and PASK. Ser-645 and Ser-649 each carry phosphoserine; by GSK3-alpha and GSK3-beta. A Phosphoserine modification is found at Ser-652. Ser-653 carries the post-translational modification Phosphoserine; by GSK3-alpha and GSK3-beta. Ser-657 is subject to Phosphoserine; by CK2. Residues 658 to 681 show a composition bias toward acidic residues; that stretch reads EDEEDPRNGPLEEDGERYDEDEEA. The segment covering 682-695 has biased composition (basic and acidic residues); the sequence is AKDRRNIRAPEWPR. At Ser-698 the chain carries Phosphoserine. The segment covering 698–714 has biased composition (polar residues); the sequence is SCTSSTSGSKRNSVDTA. Phosphothreonine is present on Thr-700. Ser-710 bears the Phosphoserine mark. The span at 715 to 737 shows a compositional bias: low complexity; sequence TSSSLSTPSEPLSPTSSLGEERN. Thr-721 is modified (phosphothreonine). Phosphoserine occurs at positions 727 and 731.

The protein belongs to the glycosyltransferase 3 family. In terms of assembly, part of the GYS1-GYG1 complex, a heterooctamer composed of a tetramer of GYS1 and 2 dimers of GYG1, where each GYS1 protomer binds to one GYG1 subunit (via GYG1 C-terminus); the GYS1 tetramer may dissociate from GYG1 dimers to continue glycogen polymerization on its own. Post-translationally, phosphorylation at Ser-8 by AMPK inactivates the enzyme activity. Primed phosphorylation at Ser-657 (site 5) by CSNK2A1 and CSNK2A2 is required for inhibitory phosphorylation at Ser-641 (site 3a), Ser-645 (site 3b), Ser-649 (site 3c) and Ser-653 (site 4) by GSK3A an GSK3B. Phosphorylated at Ser-641 by PASK, leading to inactivation; phosphorylation by PASK is inhibited by glycogen. Phosphorylated at Ser-641 by DYRK2, leading to inactivation. Dephosphorylation at Ser-641 and Ser-645 by PP1 activates the enzyme.

It catalyses the reaction [(1-&gt;4)-alpha-D-glucosyl](n) + UDP-alpha-D-glucose = [(1-&gt;4)-alpha-D-glucosyl](n+1) + UDP + H(+). It participates in glycan biosynthesis; glycogen biosynthesis. Allosteric activation by glucose-6-phosphate. Phosphorylation reduces the activity towards UDP-glucose. When in the non-phosphorylated state, glycogen synthase does not require glucose-6-phosphate as an allosteric activator; when phosphorylated it does. Its function is as follows. Glycogen synthase participates in the glycogen biosynthetic process along with glycogenin and glycogen branching enzyme. Extends the primer composed of a few glucose units formed by glycogenin by adding new glucose units to it. In this context, glycogen synthase transfers the glycosyl residue from UDP-Glc to the non-reducing end of alpha-1,4-glucan. In Pongo abelii (Sumatran orangutan), this protein is Glycogen [starch] synthase, muscle (GYS1).